A 307-amino-acid polypeptide reads, in one-letter code: Acyl transferase (307 aa).

Active-site charge relay system residues include S116, D213, and H243.

The protein belongs to the LuxD family.

Its pathway is lipid metabolism; fatty acid reduction for biolumincescence. In terms of biological role, acyl transferase is part of the fatty acid reductase system required for aldehyde biosynthesis; it produces fatty acids for the luminescent reaction. In Aliivibrio fischeri (strain ATCC 700601 / ES114) (Vibrio fischeri), this protein is Acyl transferase.